The sequence spans 265 residues: Transcriptional repressor DcmR (265 aa).

The segment at residues Leu17–Trp36 is a DNA-binding region (H-T-H motif).

Monomer.

In terms of biological role, transcriptional repressor of the dcmA gene and of its own gene. In Methylorubrum extorquens (strain DSM 6343 / CIP 106787 / DM4) (Methylobacterium extorquens), this protein is Transcriptional repressor DcmR (dcmR).